The sequence spans 580 residues: Cyclin-K (580 aa).

Residues 262–580 (KQQMPHHTPH…GGLGRAAWMR (319 aa)) are disordered. 2 stretches are compositionally biased toward low complexity: residues 263-277 (QQMP…QQPP) and 285-321 (VPQV…QQPK). Residues S324, S328, S329, and S340 each carry the phosphoserine modification. Over residues 377 to 386 (PLAAALGEAE) the composition is skewed to low complexity. Residues 400-426 (QIPPPAHPAPVHQPPPLPHRPPPPPPS) are compositionally biased toward pro residues. Low complexity predominate over residues 427 to 444 (SYMTGMSTTSSYMSGEGY). The span at 477–568 (VYPPNPPPPP…PPPIPPPGMP (92 aa)) shows a compositional bias: pro residues.

The protein belongs to the cyclin family. Cyclin C subfamily. In terms of assembly, regulatory subunit of cyclin-dependent kinases. Identified in a complex with a kinase and the RNA polymerase II holoenzyme. Interacts with POLR2A. Interacts with CDK12 and CDK13. Interacts with CDK9 according to PubMed:10574912; does not interact with CDK9 according to PubMed:22012619. As to quaternary structure, (Microbial infection) Interacts with human herpes virus 1 (HHV-1) transcriptional regulator ICP22. As to expression, widely expressed. Highest levels in testis.

Its subcellular location is the nucleus. Functionally, regulatory subunit of cyclin-dependent kinases that mediates activation of target kinases. Plays a role in transcriptional regulation via its role in regulating the phosphorylation of the C-terminal domain (CTD) of the large subunit of RNA polymerase II (POLR2A). This is Cyclin-K (CCNK) from Homo sapiens (Human).